The chain runs to 293 residues: Kallikrein-5 (293 aa).

Positions 1 to 22 (MATARPPWMWVLCALITALLLG) are cleaved as a signal peptide. A compositionally biased stretch (polar residues) spans 37–49 (HPSNTVPSGSNQD). The interval 37-68 (HPSNTVPSGSNQDLGAGAGEDARSDDSSSRII) is disordered. Positions 67–290 (IINGSDCDMH…FTKWIQETIQ (224 aa)) constitute a Peptidase S1 domain. Asn-69 is a glycosylation site (N-linked (GlcNAc...) asparagine). 6 disulfides stabilise this stretch: Cys-73/Cys-206, Cys-93/Cys-109, Cys-178/Cys-279, Cys-185/Cys-251, Cys-217/Cys-231, and Cys-241/Cys-266. Residues His-108 and Asp-153 each act as charge relay system in the active site. Asn-173 and Asn-208 each carry an N-linked (GlcNAc...) asparagine glycan. Residue Ser-245 is the Charge relay system of the active site. Residue Asn-252 is glycosylated (N-linked (GlcNAc...) asparagine).

This sequence belongs to the peptidase S1 family. Kallikrein subfamily. In terms of assembly, interacts with SPINK9. As to expression, expressed in skin, breast, brain and testis. Expressed at the stratum granulosum of palmar skin.

It is found in the secreted. Inhibited by Zn2+. May be involved in desquamation. The protein is Kallikrein-5 of Homo sapiens (Human).